A 419-amino-acid chain; its full sequence is Adenylosuccinate synthetase 1 (419 aa).

11 to 17 contacts GTP; that stretch reads GDEGKGK. Catalysis depends on Asp12, which acts as the Proton acceptor. Residues Asp12 and Gly39 each coordinate Mg(2+). Residues 12 to 15, 37 to 40, Arg138, Gln220, and Arg298 each bind IMP; these read DEGK and NAGH. The active-site Proton donor is His40. 294–300 is a binding site for substrate; the sequence is TVSKRPR. GTP is bound by residues Arg300, 326 to 328, and 407 to 409; these read NVD and SYG.

The protein belongs to the adenylosuccinate synthetase family. As to quaternary structure, homodimer. Requires Mg(2+) as cofactor.

The protein localises to the cytoplasm. It catalyses the reaction IMP + L-aspartate + GTP = N(6)-(1,2-dicarboxyethyl)-AMP + GDP + phosphate + 2 H(+). Its pathway is purine metabolism; AMP biosynthesis via de novo pathway; AMP from IMP: step 1/2. Functionally, plays an important role in the de novo pathway of purine nucleotide biosynthesis. Catalyzes the first committed step in the biosynthesis of AMP from IMP. This chain is Adenylosuccinate synthetase 1, found in Photorhabdus laumondii subsp. laumondii (strain DSM 15139 / CIP 105565 / TT01) (Photorhabdus luminescens subsp. laumondii).